The chain runs to 227 residues: Cytochrome c oxidase subunit 2 (227 aa).

Residues 1–14 lie on the Mitochondrial intermembrane side of the membrane; that stretch reads MAYPFQLGLQDATS. The helical transmembrane segment at 15-45 threads the bilayer; the sequence is PIMEELTNFHDHTLMIVFLISSLVLYIISLM. The Mitochondrial matrix portion of the chain corresponds to 46 to 59; that stretch reads LTTKLTHTSTMDAQ. A helical transmembrane segment spans residues 60–87; the sequence is EVETIWTILPAVILILIALPSLRILYMM. The Mitochondrial intermembrane portion of the chain corresponds to 88–227; it reads DEINNPVLTV…HFENWSASMI (140 aa). Residues H161, C196, E198, C200, H204, and M207 each contribute to the Cu cation site. E198 is a binding site for Mg(2+).

The protein belongs to the cytochrome c oxidase subunit 2 family. In terms of assembly, component of the cytochrome c oxidase (complex IV, CIV), a multisubunit enzyme composed of 14 subunits. The complex is composed of a catalytic core of 3 subunits MT-CO1, MT-CO2 and MT-CO3, encoded in the mitochondrial DNA, and 11 supernumerary subunits COX4I, COX5A, COX5B, COX6A, COX6B, COX6C, COX7A, COX7B, COX7C, COX8 and NDUFA4, which are encoded in the nuclear genome. The complex exists as a monomer or a dimer and forms supercomplexes (SCs) in the inner mitochondrial membrane with NADH-ubiquinone oxidoreductase (complex I, CI) and ubiquinol-cytochrome c oxidoreductase (cytochrome b-c1 complex, complex III, CIII), resulting in different assemblies (supercomplex SCI(1)III(2)IV(1) and megacomplex MCI(2)III(2)IV(2)). Found in a complex with TMEM177, COA6, COX18, COX20, SCO1 and SCO2. Interacts with TMEM177 in a COX20-dependent manner. Interacts with COX20. Interacts with COX16. Requires Cu cation as cofactor.

Its subcellular location is the mitochondrion inner membrane. It carries out the reaction 4 Fe(II)-[cytochrome c] + O2 + 8 H(+)(in) = 4 Fe(III)-[cytochrome c] + 2 H2O + 4 H(+)(out). Component of the cytochrome c oxidase, the last enzyme in the mitochondrial electron transport chain which drives oxidative phosphorylation. The respiratory chain contains 3 multisubunit complexes succinate dehydrogenase (complex II, CII), ubiquinol-cytochrome c oxidoreductase (cytochrome b-c1 complex, complex III, CIII) and cytochrome c oxidase (complex IV, CIV), that cooperate to transfer electrons derived from NADH and succinate to molecular oxygen, creating an electrochemical gradient over the inner membrane that drives transmembrane transport and the ATP synthase. Cytochrome c oxidase is the component of the respiratory chain that catalyzes the reduction of oxygen to water. Electrons originating from reduced cytochrome c in the intermembrane space (IMS) are transferred via the dinuclear copper A center (CU(A)) of subunit 2 and heme A of subunit 1 to the active site in subunit 1, a binuclear center (BNC) formed by heme A3 and copper B (CU(B)). The BNC reduces molecular oxygen to 2 water molecules using 4 electrons from cytochrome c in the IMS and 4 protons from the mitochondrial matrix. This chain is Cytochrome c oxidase subunit 2 (MT-CO2), found in Batomys granti (Luzon hairy-tailed rat).